The primary structure comprises 364 residues: Dihydroorotate dehydrogenase (quinone) (364 aa).

FMN contacts are provided by residues 62–66 (AGFDK) and T86. K66 lines the substrate pocket. 111 to 115 (NRMGF) is a binding site for substrate. Residues N142 and N175 each contribute to the FMN site. N175 contacts substrate. The active-site Nucleophile is S178. N180 lines the substrate pocket. K216 and T244 together coordinate FMN. 245 to 246 (NT) is a binding site for substrate. Residues G267, G296, and 317–318 (YT) contribute to the FMN site.

It belongs to the dihydroorotate dehydrogenase family. Type 2 subfamily. In terms of assembly, monomer. It depends on FMN as a cofactor.

Its subcellular location is the cell membrane. It catalyses the reaction (S)-dihydroorotate + a quinone = orotate + a quinol. Its pathway is pyrimidine metabolism; UMP biosynthesis via de novo pathway; orotate from (S)-dihydroorotate (quinone route): step 1/1. Functionally, catalyzes the conversion of dihydroorotate to orotate with quinone as electron acceptor. In Anaeromyxobacter sp. (strain K), this protein is Dihydroorotate dehydrogenase (quinone).